Consider the following 396-residue polypeptide: Putative glutamate--cysteine ligase 2-2 (396 aa).

This sequence belongs to the glutamate--cysteine ligase type 2 family. YbdK subfamily.

The catalysed reaction is L-cysteine + L-glutamate + ATP = gamma-L-glutamyl-L-cysteine + ADP + phosphate + H(+). Functionally, ATP-dependent carboxylate-amine ligase which exhibits weak glutamate--cysteine ligase activity. This is Putative glutamate--cysteine ligase 2-2 from Mycolicibacterium smegmatis (strain ATCC 700084 / mc(2)155) (Mycobacterium smegmatis).